Here is a 426-residue protein sequence, read N- to C-terminus: RuvB-like protein 1 (426 aa).

An ATP-binding site is contributed by glycine 62–threonine 69.

It belongs to the RuvB family. As to quaternary structure, component of the SWR1 chromatin remodeling complex, the INO80 chromatin remodeling complex, and of the R2TP complex.

Its subcellular location is the nucleus. The catalysed reaction is ATP + H2O = ADP + phosphate + H(+). Its function is as follows. DNA helicase which participates in several chromatin remodeling complexes, including the SWR1 and the INO80 complexes. The SWR1 complex mediates the ATP-dependent exchange of histone H2A for the H2A variant HZT1 leading to transcriptional regulation of selected genes by chromatin remodeling. The INO80 complex remodels chromatin by shifting nucleosomes and is involved in DNA repair. Also involved in pre-rRNA processing. In Encephalitozoon cuniculi (strain GB-M1) (Microsporidian parasite), this protein is RuvB-like protein 1 (RVB1).